Here is a 186-residue protein sequence, read N- to C-terminus: MQGHRIGYVRVSSFDQNPERQLEQTQVSKVFTDKASGKDTQRPQLEALLSFVREGDTVVVHSMDRLARNLDDLRRLVQKLTQRGVRIEFLKEGLVFTGEDSPMANLMLSVMGAFAEFERALIRERQREGITLAKQRGAYRGRKKALSDEQAATLRQRATAGEPKAQLAREFNISRETLYQYLRTDD.

Residues 4–137 enclose the Resolvase/invertase-type recombinase catalytic domain; the sequence is HRIGYVRVSS…EGITLAKQRG (134 aa). S12 serves as the catalytic O-(5'-phospho-DNA)-serine intermediate. The tract at residues 17–38 is disordered; it reads NPERQLEQTQVSKVFTDKASGK. Residues 164–183 constitute a DNA-binding region (H-T-H motif); the sequence is KAQLAREFNISRETLYQYLR.

This sequence belongs to the site-specific recombinase resolvase family.

Resolvase catalyzes the resolution (a site-specific recombination) of the cointegrated replicon to yield the final transposition products. The chain is Transposon Tn501 resolvase (tnpR) from Pseudomonas aeruginosa.